Here is a 77-residue protein sequence, read N- to C-terminus: U8-lycotoxin-Ls1i (77 aa).

Positions 1–20 (MKLIIFTGLVLFAIVSLIEV) are cleaved as a signal peptide. Positions 21-26 (QADNER) are excised as a propeptide.

Belongs to the neurotoxin 19 (CSTX) family. 08 (U8-Lctx) subfamily. Contains 4 disulfide bonds. Expressed by the venom gland.

It localises to the secreted. The sequence is that of U8-lycotoxin-Ls1i from Lycosa singoriensis (Wolf spider).